Consider the following 189-residue polypeptide: Crossover junction endodeoxyribonuclease RuvC (189 aa).

Residues Asp7, Glu68, and Asp141 contribute to the active site. Residues Asp7, Glu68, and Asp141 each coordinate Mg(2+).

It belongs to the RuvC family. In terms of assembly, homodimer which binds Holliday junction (HJ) DNA. The HJ becomes 2-fold symmetrical on binding to RuvC with unstacked arms; it has a different conformation from HJ DNA in complex with RuvA. In the full resolvosome a probable DNA-RuvA(4)-RuvB(12)-RuvC(2) complex forms which resolves the HJ. Mg(2+) serves as cofactor.

It is found in the cytoplasm. The enzyme catalyses Endonucleolytic cleavage at a junction such as a reciprocal single-stranded crossover between two homologous DNA duplexes (Holliday junction).. Its function is as follows. The RuvA-RuvB-RuvC complex processes Holliday junction (HJ) DNA during genetic recombination and DNA repair. Endonuclease that resolves HJ intermediates. Cleaves cruciform DNA by making single-stranded nicks across the HJ at symmetrical positions within the homologous arms, yielding a 5'-phosphate and a 3'-hydroxyl group; requires a central core of homology in the junction. The consensus cleavage sequence is 5'-(A/T)TT(C/G)-3'. Cleavage occurs on the 3'-side of the TT dinucleotide at the point of strand exchange. HJ branch migration catalyzed by RuvA-RuvB allows RuvC to scan DNA until it finds its consensus sequence, where it cleaves and resolves the cruciform DNA. In Rhodococcus opacus (strain B4), this protein is Crossover junction endodeoxyribonuclease RuvC.